The sequence spans 611 residues: MPPYRSRTTTHGRNMAGARGLWRATGMKDEDFGKPIIAVVNSFTQFVPGHVHLKDLGQLVAREIESAGGVAKEFNTIAVDDGIAMGHDGMLYSLPSRELIADSVEYMVNAHCADAMVCISNCDKITPGMLMAALRLNIPVVFVSGGPMEAGKVVWDDQVKKLDLVDAMVAAADDSYTDDQVKAIERSACPTCGSCSGMFTANSMNCLTEALGLSLPGNGSTLATHADRKRLFVEAGHLVVDLARRYYEQDDESVLPRSIASFPAFENAMTLDIAMGGSTNTVLHLLAAAQEAEIDFTMADIDRLSRRVPVLCKVAPANNTVHMEDVHRAGGIMGILGQLDKAGLINTDLPTVHSETVAKALDHWDVTRTNSDMVHKFYSAAPGGVPTQVAFSQERRFDSVDTDREKGVIRSKEHAFSQDGGLAVLYGNLAEDGCIVKTAGVDDSILKFSGPARIFESQDTAVLGILNGKIKAGDIVLIRYEGPRGGPGMQEMLYPTSYLKSKGLGKACALITDGRFSGGSSGLSIGHVSPEAAEGGTIGLVREGDIIDIDIPNRKIHLAVDDATLAERRAEQEETGWKPAETRKRKISTALKAYASMATSAAKGAVRKLPD.

Asp-81 contacts Mg(2+). Cys-122 contributes to the [2Fe-2S] cluster binding site. Mg(2+) is bound by residues Asp-123 and Lys-124. Lys-124 carries the post-translational modification N6-carboxylysine. A [2Fe-2S] cluster-binding site is contributed by Cys-195. Glu-491 serves as a coordination point for Mg(2+). The active-site Proton acceptor is the Ser-517.

It belongs to the IlvD/Edd family. In terms of assembly, homodimer. [2Fe-2S] cluster serves as cofactor. The cofactor is Mg(2+).

It carries out the reaction (2R)-2,3-dihydroxy-3-methylbutanoate = 3-methyl-2-oxobutanoate + H2O. The enzyme catalyses (2R,3R)-2,3-dihydroxy-3-methylpentanoate = (S)-3-methyl-2-oxopentanoate + H2O. It functions in the pathway amino-acid biosynthesis; L-isoleucine biosynthesis; L-isoleucine from 2-oxobutanoate: step 3/4. It participates in amino-acid biosynthesis; L-valine biosynthesis; L-valine from pyruvate: step 3/4. Functions in the biosynthesis of branched-chain amino acids. Catalyzes the dehydration of (2R,3R)-2,3-dihydroxy-3-methylpentanoate (2,3-dihydroxy-3-methylvalerate) into 2-oxo-3-methylpentanoate (2-oxo-3-methylvalerate) and of (2R)-2,3-dihydroxy-3-methylbutanoate (2,3-dihydroxyisovalerate) into 2-oxo-3-methylbutanoate (2-oxoisovalerate), the penultimate precursor to L-isoleucine and L-valine, respectively. The sequence is that of Dihydroxy-acid dehydratase from Brucella anthropi (strain ATCC 49188 / DSM 6882 / CCUG 24695 / JCM 21032 / LMG 3331 / NBRC 15819 / NCTC 12168 / Alc 37) (Ochrobactrum anthropi).